A 459-amino-acid polypeptide reads, in one-letter code: NADP-specific glutamate dehydrogenase (459 aa).

The active site involves K114.

This sequence belongs to the Glu/Leu/Phe/Val dehydrogenases family. As to quaternary structure, homohexamer.

The catalysed reaction is L-glutamate + NADP(+) + H2O = 2-oxoglutarate + NH4(+) + NADPH + H(+). This Emericella nidulans (strain FGSC A4 / ATCC 38163 / CBS 112.46 / NRRL 194 / M139) (Aspergillus nidulans) protein is NADP-specific glutamate dehydrogenase (gdhA).